Here is a 553-residue protein sequence, read N- to C-terminus: Methyl-coenzyme M reductase II subunit alpha (553 aa).

Position 150 (Q150) interacts with coenzyme F430. Coenzyme B contacts are provided by residues R228, K259 to H260, and R273. The residue at position 260 (H260) is a Pros-methylhistidine. R274 carries the post-translational modification 5-methylarginine. Residue Y335 participates in coenzyme M binding. Q402 is subject to 2-methylglutamine. Y446 is a coenzyme M binding site. G447 is subject to 1-thioglycine. D452 carries the post-translational modification (Z)-2,3-didehydroaspartate. S-methylcysteine is present on C454.

Belongs to the methyl-coenzyme M reductase alpha subunit family. As to quaternary structure, MCR is a hexamer of two alpha, two beta, and two gamma chains, forming a dimer of heterotrimers. Requires coenzyme F430 as cofactor. Post-translationally, the alpha subunit contains six modified amino acids near the active site region. Is methylated on His-260, Arg-274, Gln-402 and Cys-454, probably by the action of specific S-adenosylmethionine-dependent methyltransferases. Also contains a thioglycine at position 447, forming a thiopeptide bond. Contains a didehydroaspartate residue at position 452. The methylation on C5 of Arg-274 is a post-translational methylation not essential in vivo, but which plays a role for the stability and structural integrity of MCR.

The enzyme catalyses coenzyme B + methyl-coenzyme M = methane + coenzyme M-coenzyme B heterodisulfide. It participates in one-carbon metabolism; methyl-coenzyme M reduction; methane from methyl-coenzyme M: step 1/1. Functionally, component of the methyl-coenzyme M reductase (MCR) I that catalyzes the reductive cleavage of methyl-coenzyme M (CoM-S-CH3 or 2-(methylthio)ethanesulfonate) using coenzyme B (CoB or 7-mercaptoheptanoylthreonine phosphate) as reductant which results in the production of methane and the mixed heterodisulfide of CoB and CoM (CoM-S-S-CoB). This is the final step in methanogenesis. The protein is Methyl-coenzyme M reductase II subunit alpha (mrtA) of Methanothermobacter thermautotrophicus (strain ATCC 29096 / DSM 1053 / JCM 10044 / NBRC 100330 / Delta H) (Methanobacterium thermoautotrophicum).